The chain runs to 308 residues: Very-long-chain enoyl-CoA reductase (308 aa).

At 1–86 (MKHYEVEIRD…YFRDLGAQIS (86 aa)) the chain is on the cytoplasmic side. K22 is modified (N6-acetyllysine). Phosphoserine is present on S58. Position 60 is an N6-acetyllysine (K60). A helical transmembrane segment spans residues 87-106 (WVTVFLTEYAGPLFIYLLFY). The Lumenal portion of the chain corresponds to 107-124 (FRVPFIYGRKYDFTSSRH). A helical transmembrane segment spans residues 125–147 (TVVHLACMCHSFHYIKRLLETLF). The Cytoplasmic segment spans residues 148 to 158 (VHRFSHGTMPL). The helical transmembrane segment at 159–180 (RNIFKNCTYYWGFAAWMAYYIN) threads the bilayer. At 181 to 189 (HPLYTPPTY) the chain is on the lumenal side. Residues 190 to 216 (GVQQVKLALAIFVICQLGNFSIHMALR) form a helical membrane-spanning segment. The Cytoplasmic portion of the chain corresponds to 217–245 (DLRPAGSKTRKIPYPTKNPFTWLFLLVSC). A helical membrane pass occupies residues 246–262 (PNYTYEVGSWIGFAIMT). Over 263–264 (QC) the chain is Lumenal. A helical membrane pass occupies residues 265 to 292 (VPVALFSLVGFTQMTIWAKGKHRSYLKE). Over 293–308 (FRDYPPLRMPIIPFLL) the chain is Cytoplasmic.

The protein belongs to the steroid 5-alpha reductase family. As to quaternary structure, interacts with ELOVL1 and LASS2. Post-translationally, glycosylated. Expressed at high levels in brain and is also found at lower levels in several other tissues.

The protein resides in the endoplasmic reticulum membrane. It carries out the reaction a very-long-chain 2,3-saturated fatty acyl-CoA + NADP(+) = a very-long-chain (2E)-enoyl-CoA + NADPH + H(+). The enzyme catalyses octadecanoyl-CoA + NADP(+) = (2E)-octadecenoyl-CoA + NADPH + H(+). The catalysed reaction is (2E,7Z,10Z,13Z,16Z)-docosapentaenoyl-CoA + NADPH + H(+) = (7Z,10Z,13Z,16Z)-docosatetraenoyl-CoA + NADP(+). It catalyses the reaction (2E,7Z,10Z,13Z,16Z,19Z)-docosahexaenoyl-CoA + NADPH + H(+) = (7Z,10Z,13Z,16Z,19Z)-docosapentaenoyl-CoA + NADP(+). It carries out the reaction (2E,8Z,11Z,14Z)-eicosatetraenoyl-CoA + NADPH + H(+) = (8Z,11Z,14Z)-eicosatrienoyl-CoA + NADP(+). The enzyme catalyses (2E)-hexadecenoyl-CoA + NADPH + H(+) = hexadecanoyl-CoA + NADP(+). It participates in lipid metabolism; fatty acid biosynthesis. The protein operates within lipid metabolism; sphingolipid metabolism. In terms of biological role, involved in both the production of very long-chain fatty acids for sphingolipid synthesis and the degradation of the sphingosine moiety in sphingolipids through the sphingosine 1-phosphate metabolic pathway. Catalyzes the last of the four reactions of the long-chain fatty acids elongation cycle. This endoplasmic reticulum-bound enzymatic process, allows the addition of 2 carbons to the chain of long- and very long-chain fatty acids/VLCFAs per cycle. This enzyme reduces the trans-2,3-enoyl-CoA fatty acid intermediate to an acyl-CoA that can be further elongated by entering a new cycle of elongation. Thereby, it participates in the production of VLCFAs of different chain lengths that are involved in multiple biological processes as precursors of membrane lipids and lipid mediators. Catalyzes the saturation step of the sphingosine 1-phosphate metabolic pathway, the conversion of trans-2-hexadecenoyl-CoA to palmitoyl-CoA. In Rattus norvegicus (Rat), this protein is Very-long-chain enoyl-CoA reductase (Tecr).